A 68-amino-acid polypeptide reads, in one-letter code: Protein transport protein Sec61 subunit gamma (68 aa).

Topologically, residues 1–32 (MDQVMQFVEPSRQFVKDSIRLVKRCTKPDRKE) are cytoplasmic. A helical transmembrane segment spans residues 33-61 (FQKVAMATAIGFAIMGFIGFFVKLIHIPI). The Extracellular portion of the chain corresponds to 62-68 (NNIIVGG).

The protein belongs to the SecE/SEC61-gamma family. In terms of assembly, the SEC61 channel-forming translocon complex consists of channel-forming core components SEC61A1, SEC61B and SEC61G and different auxiliary components such as SEC62 and SEC63. The SEC61 channel associates with the multi-pass translocon (MPT) complex.

It localises to the endoplasmic reticulum membrane. In terms of biological role, component of SEC61 channel-forming translocon complex that mediates transport of signal peptide-containing precursor polypeptides across the endoplasmic reticulum (ER). Forms a ribosome receptor and a gated pore in the ER membrane, both functions required for cotranslational translocation of nascent polypeptides. The SEC61 channel is also involved in ER membrane insertion of transmembrane proteins: it mediates membrane insertion of the first few transmembrane segments of proteins, while insertion of subsequent transmembrane regions of multi-pass membrane proteins is mediated by the multi-pass translocon (MPT) complex. The protein is Protein transport protein Sec61 subunit gamma (sec61g) of Harpagifer antarcticus (Antarctic spiny plunderfish).